A 192-amino-acid polypeptide reads, in one-letter code: Fe/S biogenesis protein NfuA (192 aa).

[4Fe-4S] cluster is bound by residues C149 and C152.

It belongs to the NfuA family. Homodimer. [4Fe-4S] cluster serves as cofactor.

Its function is as follows. Involved in iron-sulfur cluster biogenesis. Binds a 4Fe-4S cluster, can transfer this cluster to apoproteins, and thereby intervenes in the maturation of Fe/S proteins. Could also act as a scaffold/chaperone for damaged Fe/S proteins. This chain is Fe/S biogenesis protein NfuA, found in Aeromonas salmonicida (strain A449).